Reading from the N-terminus, the 304-residue chain is Probable actin-related protein 2/3 complex subunit 2 (304 aa).

It belongs to the ARPC2 family. Component of the Arp2/3 complex.

The protein localises to the cytoplasm. It is found in the cytoskeleton. Its function is as follows. Functions as actin-binding component of the Arp2/3 complex which is involved in regulation of actin polymerization and together with an activating nucleation-promoting factor (NPF) mediates the formation of branched actin networks. Seems to contact the mother actin filament. In Anopheles gambiae (African malaria mosquito), this protein is Probable actin-related protein 2/3 complex subunit 2 (Arc-p34).